The sequence spans 731 residues: Pre-B-cell leukemia transcription factor-interacting protein 1 (731 aa).

A compositionally biased stretch (polar residues) spans 1–10; that stretch reads MASCPDSDNS. The tract at residues 1 to 155 is disordered; sequence MASCPDSDNS…SSSDDDTDVD (155 aa). The residue at position 43 (S43) is a Phosphoserine. 2 stretches are compositionally biased toward polar residues: residues 62-75 and 121-132; these read LFQTESPQSGSILT and LEGQSPPQSLPS. S129, S146, S147, and S148 each carry phosphoserine. At T152 the chain carries Phosphothreonine. Residues 270-348 are a coiled coil; the sequence is LLLDKLAKEN…QGLEADCVRG (79 aa). 3 disordered regions span residues 354–377, 447–572, and 698–731; these read LSGGRGPQGDKAIREQGPREQEPE, GQDP…DPLP, and LKKRSGKKDKHSQSPRAAGPREGHSHSHHHHHRG. Residues 364–375 show a composition bias toward basic and acidic residues; it reads KAIREQGPREQE. Residues 377–417 are a coiled coil; sequence ELSFLKQKEQLEAEAQALRQELERQRRLLGSVQQDLERSLQ. 3 stretches are compositionally biased toward basic and acidic residues: residues 472-499, 508-543, and 551-569; these read WSGKEKWWDGQRDRKAEHWKHKKEESGR, QEDREPAGRWKEGRPRVEESGSKKEGKRQGPKEPPR, and SGEKQKQPRWREGTKDSHD. A Nuclear localization signal motif is present at residues 485–505; it reads RKAEHWKHKKEESGRERKKNW. Phosphoserine is present on S567. A Nuclear localization signal motif is present at residues 695-720; sequence DKALKKRSGKKDKHSQSPRAAGPREG. Basic residues predominate over residues 698–707; the sequence is LKKRSGKKDK.

Interacts with TEX11. Interacts with ESR1, PBX1, PBX2 and PBX3. In terms of tissue distribution, expressed in early hematopoietic precursors.

The protein resides in the cytoplasm. It is found in the cytoskeleton. It localises to the nucleus. Regulator of pre-B-cell leukemia transcription factors (BPXs) function. Inhibits the binding of PBX1-HOX complex to DNA and blocks the transcriptional activity of E2A-PBX1. Tethers estrogen receptor-alpha (ESR1) to microtubules and allows them to influence estrogen receptors-alpha signaling. This Homo sapiens (Human) protein is Pre-B-cell leukemia transcription factor-interacting protein 1 (PBXIP1).